Consider the following 111-residue polypeptide: T cell receptor beta variable 29-1 (111 aa).

The first 16 residues, 1–16, serve as a signal peptide directing secretion; it reads MLSLLLLLLGLGSVFS. One can recognise an Ig-like domain in the interval 17-111; sequence AVISQKPSRD…DSSIYLCSVE (95 aa). A disulfide bond links Cys-38 and Cys-108. N-linked (GlcNAc...) asparagine glycosylation occurs at Asn-87.

Alpha-beta TR is a heterodimer composed of an alpha and beta chain; disulfide-linked. The alpha-beta TR is associated with the transmembrane signaling CD3 coreceptor proteins to form the TR-CD3 (TcR or TCR). The assembly of alpha-beta TR heterodimers with CD3 occurs in the endoplasmic reticulum where a single alpha-beta TR heterodimer associates with one CD3D-CD3E heterodimer, one CD3G-CD3E heterodimer and one CD247 homodimer forming a stable octameric structure. CD3D-CD3E and CD3G-CD3E heterodimers preferentially associate with TR alpha and TR beta chains, respectively. The association of the CD247 homodimer is the last step of TcR assembly in the endoplasmic reticulum and is required for transport to the cell surface.

Its subcellular location is the cell membrane. Its function is as follows. V region of the variable domain of T cell receptor (TR) beta chain that participates in the antigen recognition. Alpha-beta T cell receptors are antigen specific receptors which are essential to the immune response and are present on the cell surface of T lymphocytes. Recognize peptide-major histocompatibility (MH) (pMH) complexes that are displayed by antigen presenting cells (APC), a prerequisite for efficient T cell adaptive immunity against pathogens. Binding of alpha-beta TR to pMH complex initiates TR-CD3 clustering on the cell surface and intracellular activation of LCK that phosphorylates the ITAM motifs of CD3G, CD3D, CD3E and CD247 enabling the recruitment of ZAP70. In turn ZAP70 phosphorylates LAT, which recruits numerous signaling molecules to form the LAT signalosome. The LAT signalosome propagates signal branching to three major signaling pathways, the calcium, the mitogen-activated protein kinase (MAPK) kinase and the nuclear factor NF-kappa-B (NF-kB) pathways, leading to the mobilization of transcription factors that are critical for gene expression and essential for T cell growth and differentiation. The T cell repertoire is generated in the thymus, by V-(D)-J rearrangement. This repertoire is then shaped by intrathymic selection events to generate a peripheral T cell pool of self-MH restricted, non-autoaggressive T cells. Post-thymic interaction of alpha-beta TR with the pMH complexes shapes TR structural and functional avidity. The sequence is that of T cell receptor beta variable 29-1 from Homo sapiens (Human).